Here is a 407-residue protein sequence, read N- to C-terminus: Fructose-1,6-bisphosphatase, chloroplastic (407 aa).

The transit peptide at 1–50 (MAAATASSQLIFSKPYSPSRLCPFQLCVFDAKSVLSSSRRKHVNGSGVRC) directs the protein to the chloroplast. Mg(2+) is bound by residues Glu-126, Glu-155, Asp-176, Leu-178, and Asp-179. Residue 179–182 (DGSS) coordinates substrate. An intrachain disulfide couples Cys-203 to Cys-223. Substrate contacts are provided by Asn-287, Tyr-319, Tyr-337, Tyr-339, and Lys-349. Mg(2+) is bound at residue Glu-355.

The protein belongs to the FBPase class 1 family. As to quaternary structure, homotetramer. Mg(2+) serves as cofactor.

It is found in the plastid. Its subcellular location is the chloroplast stroma. The catalysed reaction is beta-D-fructose 1,6-bisphosphate + H2O = beta-D-fructose 6-phosphate + phosphate. It participates in carbohydrate biosynthesis; Calvin cycle. This Pisum sativum (Garden pea) protein is Fructose-1,6-bisphosphatase, chloroplastic (FBP).